Here is a 206-residue protein sequence, read N- to C-terminus: Large ribosomal subunit protein uL4 (206 aa).

The disordered stretch occupies residues 43 to 78 (ARSGNRKQKDREEVHHTTKKPWRQKGTGRARAGMSS). The segment covering 49 to 58 (KQKDREEVHH) has biased composition (basic and acidic residues). Over residues 59-70 (TTKKPWRQKGTG) the composition is skewed to basic residues.

The protein belongs to the universal ribosomal protein uL4 family. Part of the 50S ribosomal subunit.

In terms of biological role, one of the primary rRNA binding proteins, this protein initially binds near the 5'-end of the 23S rRNA. It is important during the early stages of 50S assembly. It makes multiple contacts with different domains of the 23S rRNA in the assembled 50S subunit and ribosome. Functionally, forms part of the polypeptide exit tunnel. The chain is Large ribosomal subunit protein uL4 from Janthinobacterium sp. (strain Marseille) (Minibacterium massiliensis).